The sequence spans 278 residues: MFSDKTRNLSRKFDQEHHYTLKKVLKYKQFCNYFVKRKKIPSLFITGTDTNVGKTIVTRAILQVLAQHNFSVVGYKPIACGGDDDLPTEPNQTDYTSEDNSDVLIILDSCPQPVAYRDINSYTFTHSSTPIFAALDAVHHIQEEKLDTDLSNLQQNYPNVVVEGTYGWLTPINKDLSFAEWVHKNNMPAVLVVGIKEGCVNHALLTAQAIQQQGVNLIGWVANRINPCLRHYAELIELLSKKISAPLLGQIPYIAQPHKKDLTSYIENPDPLLAYFQK.

51–56 (NVGKTI) lines the ATP pocket. Position 55 (Thr55) interacts with Mg(2+). Lys76 is an active-site residue. Asp102 is an ATP binding site. Asp102 and Glu163 together coordinate Mg(2+). ATP contacts are provided by residues 223–224 (NR) and 252–254 (PYI).

This sequence belongs to the dethiobiotin synthetase family. Homodimer. The cofactor is Mg(2+).

Its subcellular location is the cytoplasm. The enzyme catalyses (7R,8S)-7,8-diammoniononanoate + CO2 + ATP = (4R,5S)-dethiobiotin + ADP + phosphate + 3 H(+). It participates in cofactor biosynthesis; biotin biosynthesis; biotin from 7,8-diaminononanoate: step 1/2. Catalyzes a mechanistically unusual reaction, the ATP-dependent insertion of CO2 between the N7 and N8 nitrogen atoms of 7,8-diaminopelargonic acid (DAPA, also called 7,8-diammoniononanoate) to form a ureido ring. The polypeptide is ATP-dependent dethiobiotin synthetase BioD 1 (Haemophilus ducreyi (strain 35000HP / ATCC 700724)).